Consider the following 156-residue polypeptide: Ribosomal RNA large subunit methyltransferase H (156 aa).

S-adenosyl-L-methionine is bound by residues L73, G104, and 123–128; that span reads LGALTL.

Belongs to the RNA methyltransferase RlmH family. In terms of assembly, homodimer.

The protein resides in the cytoplasm. The catalysed reaction is pseudouridine(1915) in 23S rRNA + S-adenosyl-L-methionine = N(3)-methylpseudouridine(1915) in 23S rRNA + S-adenosyl-L-homocysteine + H(+). Its function is as follows. Specifically methylates the pseudouridine at position 1915 (m3Psi1915) in 23S rRNA. This chain is Ribosomal RNA large subunit methyltransferase H, found in Dichelobacter nodosus (strain VCS1703A).